A 963-amino-acid polypeptide reads, in one-letter code: Unconventional myosin-XIX (963 aa).

The region spanning 35–758 (HQLDDLTKVN…MLELLECGRA (724 aa)) is the Myosin motor domain. Residue 132–139 (GESGAGKT) participates in ATP binding. Residues 602–624 (LEQLLQVLHNTTPHYIRCIKPNS) are actin-binding. IQ domains follow at residues 762-782 (EQCARCIQCGWRRHRLQKQEK) and 783-812 (QRRAAVLIQAAFRSWLTRKHIRRLHIAATV). Positions 829–963 (SKELDGMEEK…LLESHRPVQV (135 aa)) are myMOMA region.

It belongs to the TRAFAC class myosin-kinesin ATPase superfamily. Myosin family. As to quaternary structure, myosin is a hexamer of 2 heavy chains and 4 light chains: interacts with myosin light chains MYL9 and MYL12B.

Its subcellular location is the mitochondrion outer membrane. The protein localises to the cytoplasm. It localises to the cytoskeleton. In terms of biological role, actin-based motor molecule with ATPase activity that localizes to the mitochondrion outer membrane. Motor protein that moves towards the plus-end of actin filaments. Required for mitochondrial inheritance during mitosis. May be involved in mitochondrial transport or positioning. The chain is Unconventional myosin-XIX from Mus musculus (Mouse).